Consider the following 493-residue polypeptide: Cysteine sulfinic acid decarboxylase (493 aa).

Lys305 carries the N6-(pyridoxal phosphate)lysine modification.

This sequence belongs to the group II decarboxylase family. As to quaternary structure, homodimer. Pyridoxal 5'-phosphate is required as a cofactor. Expressed in kidney and liver not detected in lymphoid tissues and lung. Expressed in kidney, liver and brain. 7 and 4 times higher expression in kidney and liver than in brain, respectively. Low level of detection in skeletal muscle. Expressed in brain, olfactory bulb, liver, skeletal muscle and kidney with the highest expression in liver and lowest in skeletal muscle (at protein level).

It carries out the reaction L-aspartate + H(+) = beta-alanine + CO2. The catalysed reaction is 3-sulfino-L-alanine + H(+) = hypotaurine + CO2. It catalyses the reaction L-cysteate + H(+) = taurine + CO2. The protein operates within organosulfur biosynthesis; taurine biosynthesis; hypotaurine from L-cysteine: step 2/2. With respect to regulation, activated by Mn(2+). Inhibited by bis-carboxymethyl-trithiocarbonate, ethylxanthogenacetic acid and 2,5-disulfoaniline. Not affected by Li(+) within 0.05-40 mM concentration range. Functionally, catalyzes the decarboxylation of L-aspartate, 3-sulfino-L-alanine (cysteine sulfinic acid), and L-cysteate to beta-alanine, hypotaurine and taurine, respectively. The preferred substrate is 3-sulfino-L-alanine. Does not exhibit any decarboxylation activity toward glutamate. This is Cysteine sulfinic acid decarboxylase from Mus musculus (Mouse).